A 208-amino-acid polypeptide reads, in one-letter code: Imidazoleglycerol-phosphate dehydratase (208 aa).

Belongs to the imidazoleglycerol-phosphate dehydratase family.

Its subcellular location is the cytoplasm. The catalysed reaction is D-erythro-1-(imidazol-4-yl)glycerol 3-phosphate = 3-(imidazol-4-yl)-2-oxopropyl phosphate + H2O. Its pathway is amino-acid biosynthesis; L-histidine biosynthesis; L-histidine from 5-phospho-alpha-D-ribose 1-diphosphate: step 6/9. The chain is Imidazoleglycerol-phosphate dehydratase from Paenarthrobacter aurescens (strain TC1).